Reading from the N-terminus, the 826-residue chain is Villin-1 (826 aa).

Positions 1–734 (MVELSKKVTG…YDELKAELGD (734 aa)) are core. The stretch at 27 to 76 (MEMVPVPTKSYGNFYEGDCYVLLSTRKTGSGFSYNIHYWLGKNSSQDEQG) is one Gelsolin-like 1 repeat. 112 to 119 (KQGLIYKQ) contributes to the a 1,2-diacyl-sn-glycero-3-phospho-(1D-myo-inositol-4,5-bisphosphate) binding site. Positions 129–137 (VETNTYNVQ) are crucial for binding an actin filament. 138–146 (RLLHVKGKK) contacts a 1,2-diacyl-sn-glycero-3-phospho-(1D-myo-inositol-4,5-bisphosphate). 5 Gelsolin-like repeats span residues 148–188 (VVAA…AERL), 265–309 (LVIQ…EEKQ), 408–457 (QELV…DELA), 528–568 (TKAF…DERE), and 631–672 (FLAT…SEKE). A headpiece region spans residues 735 to 826 (NASIGQLVSG…QNLKKEKGLF (92 aa)). An HP domain is found at 760–826 (PTKLETFPLD…QNLKKEKGLF (67 aa)). Residues 820–823 (KKEK) are absolutely required for activity.

It belongs to the villin/gelsolin family. As to quaternary structure, monomer. Homodimer. Associates with F-actin; the association with F-actin is inhibited by tropomyosin. Phosphorylated on tyrosine residues. The unphosphorylated form increases the initial rate of actin-nucleating activity, whereas the tyrosine-phosphorylated form inhibits actin-nucleating activity, enhances actin-bundling activity and enhances actin-severing activity by reducing high Ca(2+) requirements. The tyrosine-phosphorylated form does not regulate actin-capping activity. Tyrosine phosphorylation is essential for cell migration: tyrosine phosphorylation sites in the N-terminus half regulate actin reorganization and cell morphology, whereas tyrosine phosphorylation sites in the C-terminus half regulate cell migration. Tyrosine phosphorylation is induced by epidermal growth factor (EGF) and stimulates cell migration. As to expression, specifically expressed in epithelial cells. Component of brush border microvilli.

The protein localises to the cytoplasm. The protein resides in the cytoskeleton. It is found in the cell projection. It localises to the microvillus. Its subcellular location is the lamellipodium. The protein localises to the ruffle. The protein resides in the filopodium tip. It is found in the filopodium. Its function is as follows. Epithelial cell-specific Ca(2+)-regulated actin-modifying protein that modulates the reorganization of microvillar actin filaments. Plays a role in the actin nucleation, actin filament bundle assembly, actin filament capping and severing. Binds phosphatidylinositol 4,5-bisphosphate (PIP2) and lysophosphatidic acid (LPA); binds LPA with higher affinity than PIP2. Binding to LPA increases its phosphorylation by SRC and inhibits all actin-modifying activities. Binding to PIP2 inhibits actin-capping and -severing activities but enhances actin-bundling activity. Regulates the intestinal epithelial cell morphology, cell invasion, cell migration and apoptosis. Protects against apoptosis induced by dextran sodium sulfate (DSS) in the gastrointestinal epithelium. Appears to regulate cell death by maintaining mitochondrial integrity. Enhances hepatocyte growth factor (HGF)-induced epithelial cell motility, chemotaxis and wound repair. Its actin-bundling activity is inhibited by tropomyosin. The chain is Villin-1 (VIL1) from Gallus gallus (Chicken).